Reading from the N-terminus, the 348-residue chain is 4-hydroxyphenylpyruvate dioxygenase (348 aa).

2 VOC domains span residues 11 to 141 (GFAF…ITSP) and 151 to 303 (AIDH…IFTE). Residues His154, His232, and Glu312 each contribute to the Fe cation site.

This sequence belongs to the 4HPPD family. Fe cation is required as a cofactor.

It carries out the reaction 3-(4-hydroxyphenyl)pyruvate + O2 = homogentisate + CO2. Catalyzes the transformation of p-hydroxyphenylpyruvate into HGA. Has hemolytic and brown pigment production activity. The protein is 4-hydroxyphenylpyruvate dioxygenase (lly) of Legionella pneumophila subsp. pneumophila (strain Philadelphia 1 / ATCC 33152 / DSM 7513).